The following is a 282-amino-acid chain: Pantothenate synthetase (282 aa).

M30–H37 provides a ligand contact to ATP. H37 serves as the catalytic Proton donor. Q61 contributes to the (R)-pantoate binding site. Q61 is a beta-alanine binding site. G147 to D150 contacts ATP. Position 153 (Q153) interacts with (R)-pantoate. ATP contacts are provided by residues I176 and K184–R187.

It belongs to the pantothenate synthetase family. In terms of assembly, homodimer.

Its subcellular location is the cytoplasm. The catalysed reaction is (R)-pantoate + beta-alanine + ATP = (R)-pantothenate + AMP + diphosphate + H(+). Its pathway is cofactor biosynthesis; (R)-pantothenate biosynthesis; (R)-pantothenate from (R)-pantoate and beta-alanine: step 1/1. Functionally, catalyzes the condensation of pantoate with beta-alanine in an ATP-dependent reaction via a pantoyl-adenylate intermediate. The protein is Pantothenate synthetase of Enterococcus faecalis (strain ATCC 700802 / V583).